We begin with the raw amino-acid sequence, 674 residues long: MVRRAPGASLALLLWVTAVSCSPAGPGAATARRQDEAFSTARLTSRCLSLQITRISAFFKHFQDNGSLAWCQNYKQCSKCLEPCKESWDLKRNHCQSFCEPLFPKKNYECLTSCEFLKYILSVKQGDCPAPEKASGFAAACFESCEADSECSGVKKCCSNGCGHTCQVPKNLYKGVPLKPRKELKFIELQSGDLEVKWSSKFNISIEPVIYVVQRRWNQGIHPSEDDATNWQTVAQTTDERVQLSDIRASRWYQFRVAAVNVHGTRGFTAPSKHFRSSKDPSAPPAPSNIRIANISANNDGTVNVMITWDLPEEPDIPVHHYKVFWSWTYSKYVIPAKKKRRKITDGPQNYVVLEGLQPNSNYNVELQAVTRWGQIRLKSAKVSLHFSTTQDNRNNNEQTSVEKPPKGVVDPYPTFQRRKPTRFLKIGTPFYQDNQLQVKIYWKKSGINMNQFQVHSLLESCTHNDTKGLEKVTELTYENYMILKDLSFSCKYKVTVLPAKSKSRFKAESIFFVTPPCSTFKEKTHKHINCAAEEVPVLPKVLAKPENLSASFIVQEGNITGHFSWKISKAVLHQPMTGFQVTWAEVTTESRQNSLPNSIISQSQILPADHYVLTVPNLRPSMLYRLEVQVLTTGGEGPATIKLFRTPDLPPFLPHRPHLKHHPHRYKPPPEKY.

A signal peptide spans 1 to 21; that stretch reads MVRRAPGASLALLLWVTAVSC. 4 disulfide bridges follow: Cys-47-Cys-71, Cys-80-Cys-99, Cys-84-Cys-95, and Cys-110-Cys-114. A glycan (N-linked (GlcNAc...) asparagine) is linked at Asn-65. Residues 121-170 form the WAP domain; sequence LSVKQGDCPAPEKASGFAAACFESCEADSECSGVKKCCSNGCGHTCQVPK. 4 Fibronectin type-III domains span residues 180 to 281, 286 to 392, 418 to 515, and 545 to 652; these read PRKE…SKDP, APSN…TTQD, RRKP…FFVT, and KPEN…DLPP. Asn-203 and Asn-294 each carry an N-linked (GlcNAc...) asparagine glycan. Residues 388–402 are compositionally biased toward polar residues; sequence STTQDNRNNNEQTSV. The disordered stretch occupies residues 388–413; it reads STTQDNRNNNEQTSVEKPPKGVVDPY. N-linked (GlcNAc...) asparagine glycans are attached at residues Asn-465, Asn-548, and Asn-559. The segment at 655-674 is disordered; the sequence is PHRPHLKHHPHRYKPPPEKY. The span at 656–668 shows a compositional bias: basic residues; that stretch reads HRPHLKHHPHRYK.

It is found in the cell surface. Its function is as follows. May be an adhesion-like molecule with anti-protease activity. This chain is Anosmin-1, found in Coturnix japonica (Japanese quail).